The primary structure comprises 440 residues: MEQLAHLYHEHISELNRRVADITSRENLSGLVIHSGQPHRQFLDDMDYPFKVNPHFKAWLPVIDNPNSWLVVNGHDKPTLIFYRPVDFWHKVADEPTDFWAEYVDIKYLTKADKVAEFLPADIDNWAYIGEHLDVADVLGFNRRNPDSVLSYLNYHRADKTAYELACMRKSNSIAVTGHQAAKTAFYNGASEFEILQVYLSAISQGENQVPYSSIVALNENAAILHYTALEQTSPPQRLSFLIDAGANFHGYASDITRSYAFEKNIFDDLITAMDSMQLQIIAMMKPGVSYVDLHVATHHKLAQILIDFDIATGDAAGLVEQGITSAFFPHGLGHMLGLQVHDMGGFLADEKGTHIASPAEHPFLRCTRTLAENQVLTIEPGVYIIDSLLAQLKQDNRQQQVNWNTVDILRPFGGIRIEDNVIVHCDRTENMTRNFGLNR.

5 residues coordinate Mn(2+): Asp-244, Asp-255, His-335, Glu-380, and Glu-419.

Belongs to the peptidase M24B family. Bacterial-type prolidase subfamily. Mn(2+) is required as a cofactor.

The catalysed reaction is Xaa-L-Pro dipeptide + H2O = an L-alpha-amino acid + L-proline. In terms of biological role, splits dipeptides with a prolyl residue in the C-terminal position. The protein is Xaa-Pro dipeptidase of Shewanella piezotolerans (strain WP3 / JCM 13877).